The following is a 238-amino-acid chain: Aspartate/glutamate leucyltransferase (238 aa).

It belongs to the R-transferase family. Bpt subfamily.

Its subcellular location is the cytoplasm. The catalysed reaction is N-terminal L-glutamyl-[protein] + L-leucyl-tRNA(Leu) = N-terminal L-leucyl-L-glutamyl-[protein] + tRNA(Leu) + H(+). The enzyme catalyses N-terminal L-aspartyl-[protein] + L-leucyl-tRNA(Leu) = N-terminal L-leucyl-L-aspartyl-[protein] + tRNA(Leu) + H(+). Functionally, functions in the N-end rule pathway of protein degradation where it conjugates Leu from its aminoacyl-tRNA to the N-termini of proteins containing an N-terminal aspartate or glutamate. The sequence is that of Aspartate/glutamate leucyltransferase from Shewanella oneidensis (strain ATCC 700550 / JCM 31522 / CIP 106686 / LMG 19005 / NCIMB 14063 / MR-1).